Reading from the N-terminus, the 544-residue chain is Protein angel homolog 2 (544 aa).

Belongs to the CCR4/nocturin family.

The chain is Protein angel homolog 2 (ANGEL2) from Bos taurus (Bovine).